A 224-amino-acid chain; its full sequence is Thiamine-phosphate synthase (224 aa).

Residues 44 to 48 (QFREK) and Asn-79 each bind 4-amino-2-methyl-5-(diphosphooxymethyl)pyrimidine. Mg(2+) is bound by residues Asp-80 and Asp-99. Ser-117 serves as a coordination point for 4-amino-2-methyl-5-(diphosphooxymethyl)pyrimidine. Residue 143–145 (TET) coordinates 2-[(2R,5Z)-2-carboxy-4-methylthiazol-5(2H)-ylidene]ethyl phosphate. Lys-146 contributes to the 4-amino-2-methyl-5-(diphosphooxymethyl)pyrimidine binding site. 2-[(2R,5Z)-2-carboxy-4-methylthiazol-5(2H)-ylidene]ethyl phosphate contacts are provided by residues Gly-175 and 195-196 (IS).

The protein belongs to the thiamine-phosphate synthase family. Mg(2+) serves as cofactor.

The enzyme catalyses 2-[(2R,5Z)-2-carboxy-4-methylthiazol-5(2H)-ylidene]ethyl phosphate + 4-amino-2-methyl-5-(diphosphooxymethyl)pyrimidine + 2 H(+) = thiamine phosphate + CO2 + diphosphate. It catalyses the reaction 2-(2-carboxy-4-methylthiazol-5-yl)ethyl phosphate + 4-amino-2-methyl-5-(diphosphooxymethyl)pyrimidine + 2 H(+) = thiamine phosphate + CO2 + diphosphate. It carries out the reaction 4-methyl-5-(2-phosphooxyethyl)-thiazole + 4-amino-2-methyl-5-(diphosphooxymethyl)pyrimidine + H(+) = thiamine phosphate + diphosphate. Its pathway is cofactor biosynthesis; thiamine diphosphate biosynthesis; thiamine phosphate from 4-amino-2-methyl-5-diphosphomethylpyrimidine and 4-methyl-5-(2-phosphoethyl)-thiazole: step 1/1. Its function is as follows. Condenses 4-methyl-5-(beta-hydroxyethyl)thiazole monophosphate (THZ-P) and 2-methyl-4-amino-5-hydroxymethyl pyrimidine pyrophosphate (HMP-PP) to form thiamine monophosphate (TMP). The polypeptide is Thiamine-phosphate synthase (Bacillus velezensis (strain DSM 23117 / BGSC 10A6 / LMG 26770 / FZB42) (Bacillus amyloliquefaciens subsp. plantarum)).